We begin with the raw amino-acid sequence, 657 residues long: Methyl-accepting chemotaxis protein CtpL (657 aa).

The Cytoplasmic portion of the chain corresponds to 1 to 5; that stretch reads MRLKQ. A helical transmembrane segment spans residues 6–26; the sequence is LTNLNTLLLLTVCLALGITLW. Over 27 to 305 the chain is Periplasmic; it reads WSQRAMERPF…ERQRLQGQVR (279 aa). Residues 306–326 form a helical membrane-spanning segment; that stretch reads LIQGGMIALILLIALAIDSLQ. The HAMP domain occupies 327 to 380; that stretch reads RRLARVLGQLVPALSAWADGDFSRPISLRTRTEDLRNLEDSLNRLRSFLAELVG. Over 327–657 the chain is Cytoplasmic; the sequence is RRLARVLGQL…LRTTVQAFRL (331 aa). One can recognise a Methyl-accepting transducer domain in the interval 385-621; sequence RAEQVAGSSQ…EIRSHSERIH (237 aa).

It belongs to the methyl-accepting chemotaxis (MCP) protein family.

Its subcellular location is the cell inner membrane. Chemotactic-signal transducers respond to changes in the concentration of attractants and repellents in the environment, transduce a signal from the outside to the inside of the cell, and facilitate sensory adaptation through the variation of the level of methylation. Chemoreceptor for inorganic phosphate, which is required for taxis at low concentrations of phosphate. Is also responsible for the positive chemotaxis toward 4-chloroaniline (4CA) and catechol. Does not recognize inorganic phosphate directly, but via a complex between the periplasmic protein PstS and inorganic phosphate. This chain is Methyl-accepting chemotaxis protein CtpL, found in Pseudomonas aeruginosa (strain ATCC 15692 / DSM 22644 / CIP 104116 / JCM 14847 / LMG 12228 / 1C / PRS 101 / PAO1).